The sequence spans 312 residues: MASYLDFEKNIQQIDEDIINAQIKGDTEAVSILKKNLEKEISKTYKNLSDFQRLQLARHPDRPYALDYIELILNDAHEIHGDRAFRDDPAIVCFMGYLGEKKIIVIGEQKGRGTKDKIARNFGMPHPEGYRKALRVARLAEKFQIPILFLIDTPGAYPGIGAEERGQSEAIARNLYELSDLKIPTIAIVIGEGGSGGALAIGVADRLAMMKNSVFSVISPEGCAAILWNDPAKSEAATKVMKVTADDLKSQGLIDDVIDEPTNGAHRNKEAAAVAIADYVKKSLNELENIDVRELSANRMQKILKLGAYQEA.

The region spanning 36–286 (NLEKEISKTY…ADYVKKSLNE (251 aa)) is the CoA carboxyltransferase C-terminal domain.

Belongs to the AccA family. As to quaternary structure, acetyl-CoA carboxylase is a heterohexamer composed of biotin carboxyl carrier protein (AccB), biotin carboxylase (AccC) and two subunits each of ACCase subunit alpha (AccA) and ACCase subunit beta (AccD).

It localises to the cytoplasm. It carries out the reaction N(6)-carboxybiotinyl-L-lysyl-[protein] + acetyl-CoA = N(6)-biotinyl-L-lysyl-[protein] + malonyl-CoA. The protein operates within lipid metabolism; malonyl-CoA biosynthesis; malonyl-CoA from acetyl-CoA: step 1/1. Its function is as follows. Component of the acetyl coenzyme A carboxylase (ACC) complex. First, biotin carboxylase catalyzes the carboxylation of biotin on its carrier protein (BCCP) and then the CO(2) group is transferred by the carboxyltransferase to acetyl-CoA to form malonyl-CoA. The sequence is that of Acetyl-coenzyme A carboxylase carboxyl transferase subunit alpha from Campylobacter jejuni subsp. jejuni serotype O:23/36 (strain 81-176).